A 101-amino-acid polypeptide reads, in one-letter code: NADH-quinone oxidoreductase subunit K (101 aa).

The next 3 helical transmembrane spans lie at 4–24, 29–49, and 61–81; these read VYDY…GIML, IILL…NFIA, and VFVF…LAIV.

This sequence belongs to the complex I subunit 4L family. NDH-1 is composed of 14 different subunits. Subunits NuoA, H, J, K, L, M, N constitute the membrane sector of the complex.

It is found in the cell inner membrane. The enzyme catalyses a quinone + NADH + 5 H(+)(in) = a quinol + NAD(+) + 4 H(+)(out). Functionally, NDH-1 shuttles electrons from NADH, via FMN and iron-sulfur (Fe-S) centers, to quinones in the respiratory chain. The immediate electron acceptor for the enzyme in this species is believed to be ubiquinone. Couples the redox reaction to proton translocation (for every two electrons transferred, four hydrogen ions are translocated across the cytoplasmic membrane), and thus conserves the redox energy in a proton gradient. The protein is NADH-quinone oxidoreductase subunit K of Legionella pneumophila (strain Paris).